The following is a 489-amino-acid chain: UDP-N-acetylmuramate--L-alanine ligase (489 aa).

Gly128–Thr134 lines the ATP pocket.

The protein belongs to the MurCDEF family.

It is found in the cytoplasm. The catalysed reaction is UDP-N-acetyl-alpha-D-muramate + L-alanine + ATP = UDP-N-acetyl-alpha-D-muramoyl-L-alanine + ADP + phosphate + H(+). It functions in the pathway cell wall biogenesis; peptidoglycan biosynthesis. In terms of biological role, cell wall formation. The polypeptide is UDP-N-acetylmuramate--L-alanine ligase (Shewanella pealeana (strain ATCC 700345 / ANG-SQ1)).